We begin with the raw amino-acid sequence, 194 residues long: Ribonuclease HII (194 aa).

One can recognise an RNase H type-2 domain in the interval 3 to 193; it reads ILTAGVDEAG…VRNLFAQQAL (191 aa). Residues Asp9, Glu10, and Asp101 each contribute to the a divalent metal cation site.

Belongs to the RNase HII family. It depends on Mn(2+) as a cofactor. Mg(2+) serves as cofactor.

It is found in the cytoplasm. The catalysed reaction is Endonucleolytic cleavage to 5'-phosphomonoester.. Functionally, endonuclease that specifically degrades the RNA of RNA-DNA hybrids. The chain is Ribonuclease HII from Neisseria meningitidis serogroup C / serotype 2a (strain ATCC 700532 / DSM 15464 / FAM18).